We begin with the raw amino-acid sequence, 332 residues long: RNA polymerase principal sigma factor HrdD (332 aa).

The segment at 1–21 is disordered; that stretch reads MATRAVARRQPAASGETGAAG. Positions 124 to 137 match the Polymerase core binding motif; it reads DLIQEGNAGLVRAV. Positions 294-313 form a DNA-binding region, H-T-H motif; that stretch reads LTEVGKQHGLTRERIRQIEK.

Belongs to the sigma-70 factor family.

In terms of biological role, sigma factors are initiation factors that promote the attachment of RNA polymerase to specific initiation sites and are then released. This is RNA polymerase principal sigma factor HrdD (hrdD) from Streptomyces griseus.